The chain runs to 107 residues: U1-lycotoxin-Ls1b (107 aa).

The signal sequence occupies residues Met1–Ser20. Positions Glu21–Arg41 are excised as a propeptide. Disulfide bonds link Cys44–Cys59, Cys51–Cys68, Cys58–Cys86, and Cys70–Cys84.

Belongs to the neurotoxin 19 (CSTX) family. 04 (U1-Lctx) subfamily. Expressed by the venom gland.

The protein resides in the secreted. In Lycosa singoriensis (Wolf spider), this protein is U1-lycotoxin-Ls1b.